Here is a 201-residue protein sequence, read N- to C-terminus: Small ribosomal subunit protein uS4 (201 aa).

Positions S91 to E151 constitute an S4 RNA-binding domain.

This sequence belongs to the universal ribosomal protein uS4 family. In terms of assembly, part of the 30S ribosomal subunit. Contacts protein S5. The interaction surface between S4 and S5 is involved in control of translational fidelity.

In terms of biological role, one of the primary rRNA binding proteins, it binds directly to 16S rRNA where it nucleates assembly of the body of the 30S subunit. Functionally, with S5 and S12 plays an important role in translational accuracy. This chain is Small ribosomal subunit protein uS4, found in Corynebacterium jeikeium (strain K411).